Consider the following 445-residue polypeptide: Probable phosphoglucosamine mutase (445 aa).

Serine 99 serves as the catalytic Phosphoserine intermediate. Mg(2+)-binding residues include serine 99, aspartate 238, aspartate 240, and aspartate 242. Serine 99 bears the Phosphoserine mark.

This sequence belongs to the phosphohexose mutase family. Mg(2+) serves as cofactor. Activated by phosphorylation.

The catalysed reaction is alpha-D-glucosamine 1-phosphate = D-glucosamine 6-phosphate. In terms of biological role, catalyzes the conversion of glucosamine-6-phosphate to glucosamine-1-phosphate. The sequence is that of Probable phosphoglucosamine mutase from Methanobrevibacter smithii (strain ATCC 35061 / DSM 861 / OCM 144 / PS).